Here is a 481-residue protein sequence, read N- to C-terminus: Cardiolipin synthase A (481 aa).

A run of 2 helical transmembrane segments spans residues 10–30 and 40–60; these read FFGY…LHAL and IAWA…YLIF. 2 PLD phosphodiesterase domains span residues 220 to 247 and 394 to 421; these read VNFR…GDEY and QPGF…DNRS. Active-site residues include His225, Lys227, Asp232, His399, Lys401, and Asp406.

It belongs to the phospholipase D family. Cardiolipin synthase subfamily. ClsA sub-subfamily.

The protein localises to the cell inner membrane. It catalyses the reaction 2 a 1,2-diacyl-sn-glycero-3-phospho-(1'-sn-glycerol) = a cardiolipin + glycerol. In terms of biological role, catalyzes the reversible phosphatidyl group transfer from one phosphatidylglycerol molecule to another to form cardiolipin (CL) (diphosphatidylglycerol) and glycerol. The protein is Cardiolipin synthase A of Pseudomonas putida (Arthrobacter siderocapsulatus).